We begin with the raw amino-acid sequence, 159 residues long: Small ribosomal subunit protein uS7m (159 aa).

The protein belongs to the universal ribosomal protein uS7 family. Part of the small ribosomal subunit.

It is found in the mitochondrion. One of the primary rRNA binding proteins, it binds directly to the small rRNA where it nucleates assembly of the head domain of the small subunit. This chain is Small ribosomal subunit protein uS7m (RPS7), found in Reclinomonas americana.